We begin with the raw amino-acid sequence, 235 residues long: Leucyl/phenylalanyl-tRNA--protein transferase (235 aa).

This sequence belongs to the L/F-transferase family.

The protein resides in the cytoplasm. It catalyses the reaction N-terminal L-lysyl-[protein] + L-leucyl-tRNA(Leu) = N-terminal L-leucyl-L-lysyl-[protein] + tRNA(Leu) + H(+). The catalysed reaction is N-terminal L-arginyl-[protein] + L-leucyl-tRNA(Leu) = N-terminal L-leucyl-L-arginyl-[protein] + tRNA(Leu) + H(+). The enzyme catalyses L-phenylalanyl-tRNA(Phe) + an N-terminal L-alpha-aminoacyl-[protein] = an N-terminal L-phenylalanyl-L-alpha-aminoacyl-[protein] + tRNA(Phe). Functions in the N-end rule pathway of protein degradation where it conjugates Leu, Phe and, less efficiently, Met from aminoacyl-tRNAs to the N-termini of proteins containing an N-terminal arginine or lysine. The protein is Leucyl/phenylalanyl-tRNA--protein transferase of Anaeromyxobacter sp. (strain Fw109-5).